Here is a 329-residue protein sequence, read N- to C-terminus: rRNA 2'-O-methyltransferase fibrillarin (329 aa).

Residues 1 to 85 (MAFGAPRGRG…GGARGGARGG (85 aa)) are disordered. The segment covering 13 to 84 (RGGFGGRGGS…RGGARGGARG (72 aa)) has biased composition (gly residues). S-adenosyl-L-methionine is bound by residues 181 to 182 (TS), 200 to 201 (EF), 225 to 226 (DA), and 245 to 248 (DVAQ).

It belongs to the methyltransferase superfamily. Fibrillarin family. Component of box C/D small nucleolar ribonucleoprotein (snoRNP) particles that contain SNU13, NOP1, SIK1/NOP56 and NOP58, plus a guide RNA. In terms of processing, by homology to other fibrillarins, some or all of the N-terminal domain arginines are modified to asymmetric dimethylarginine (DMA).

The protein localises to the nucleus. Its subcellular location is the nucleolus. The enzyme catalyses L-glutaminyl-[histone H2A] + S-adenosyl-L-methionine = N(5)-methyl-L-glutaminyl-[histone H2A] + S-adenosyl-L-homocysteine + H(+). Functionally, S-adenosyl-L-methionine-dependent methyltransferase that has the ability to methylate both RNAs and proteins. Involved in pre-rRNA processing. Utilizes the methyl donor S-adenosyl-L-methionine to catalyze the site-specific 2'-hydroxyl methylation of ribose moieties in pre-ribosomal RNA. Site specificity is provided by a guide RNA that base pairs with the substrate. Methylation occurs at a characteristic distance from the sequence involved in base pairing with the guide RNA. Also acts as a protein methyltransferase by mediating methylation of 'Gln-105' of histone H2A (H2AQ105me), a modification that impairs binding of the FACT complex and is specifically present at 35S ribosomal DNA locus. The protein is rRNA 2'-O-methyltransferase fibrillarin (NOP1) of Debaryomyces hansenii (strain ATCC 36239 / CBS 767 / BCRC 21394 / JCM 1990 / NBRC 0083 / IGC 2968) (Yeast).